The sequence spans 98 residues: NADH-ubiquinone oxidoreductase chain 4L (98 aa).

A run of 3 helical transmembrane segments spans residues 1 to 21 (MSLV…GLLM), 29 to 49 (SLLC…LMIL), and 61 to 81 (IILL…LVMV).

This sequence belongs to the complex I subunit 4L family. As to quaternary structure, core subunit of respiratory chain NADH dehydrogenase (Complex I) which is composed of 45 different subunits.

Its subcellular location is the mitochondrion inner membrane. It carries out the reaction a ubiquinone + NADH + 5 H(+)(in) = a ubiquinol + NAD(+) + 4 H(+)(out). In terms of biological role, core subunit of the mitochondrial membrane respiratory chain NADH dehydrogenase (Complex I) which catalyzes electron transfer from NADH through the respiratory chain, using ubiquinone as an electron acceptor. Part of the enzyme membrane arm which is embedded in the lipid bilayer and involved in proton translocation. This chain is NADH-ubiquinone oxidoreductase chain 4L (MT-ND4L), found in Capra hircus (Goat).